Reading from the N-terminus, the 419-residue chain is Gamma-glutamyl phosphate reductase (419 aa).

This sequence belongs to the gamma-glutamyl phosphate reductase family.

It localises to the cytoplasm. The enzyme catalyses L-glutamate 5-semialdehyde + phosphate + NADP(+) = L-glutamyl 5-phosphate + NADPH + H(+). Its pathway is amino-acid biosynthesis; L-proline biosynthesis; L-glutamate 5-semialdehyde from L-glutamate: step 2/2. In terms of biological role, catalyzes the NADPH-dependent reduction of L-glutamate 5-phosphate into L-glutamate 5-semialdehyde and phosphate. The product spontaneously undergoes cyclization to form 1-pyrroline-5-carboxylate. This is Gamma-glutamyl phosphate reductase from Gloeobacter violaceus (strain ATCC 29082 / PCC 7421).